A 374-amino-acid chain; its full sequence is Protein FAM199X (374 aa).

The tract at residues Tyr-238–Lys-343 is disordered. The segment covering Ser-261–Thr-295 has biased composition (low complexity). The segment covering Asp-315–Gln-334 has biased composition (basic residues). Positions Lys-317–Leu-346 form a coiled coil.

Belongs to the FAM199 family.

The polypeptide is Protein FAM199X (fam199x) (Danio rerio (Zebrafish)).